Reading from the N-terminus, the 211-residue chain is MRIHVVDHPLVAHKLTTLRDKRTDSPTFRRLADELVTLLAYEATRDVRTELVDIETPVTPTTGVKLSHPRPLVVPILRAGLGMLDGMVRLLPTAEVGFLGMIRNEETLKAETYATRMPEDLSGRQVYVLDPMLATGGTLVAAIRELIERGADDVTAVVLLAAPEGVEVMERELAGTPVTVVTASVDERLNENGYIVPGLGDAGDRMYGTAE.

5-phospho-alpha-D-ribose 1-diphosphate is bound by residues Arg-78, Arg-103, and 130–138 (DPMLATGGT). Residues Ile-195 and 200–202 (GDA) each bind uracil. Asp-201 is a binding site for 5-phospho-alpha-D-ribose 1-diphosphate.

Belongs to the UPRTase family. Mg(2+) is required as a cofactor.

It catalyses the reaction UMP + diphosphate = 5-phospho-alpha-D-ribose 1-diphosphate + uracil. Its pathway is pyrimidine metabolism; UMP biosynthesis via salvage pathway; UMP from uracil: step 1/1. Its activity is regulated as follows. Allosterically activated by GTP. Functionally, catalyzes the conversion of uracil and 5-phospho-alpha-D-ribose 1-diphosphate (PRPP) to UMP and diphosphate. The sequence is that of Uracil phosphoribosyltransferase from Streptomyces griseus subsp. griseus (strain JCM 4626 / CBS 651.72 / NBRC 13350 / KCC S-0626 / ISP 5235).